The sequence spans 500 residues: Neuronal acetylcholine receptor subunit beta-2 (500 aa).

Residues 1–24 (MAGHSNSMALFSFSLLWLCSGVLG) form the signal peptide. At 25 to 237 (TDTEERLVEH…IIRRKPLFYT (213 aa)) the chain is on the extracellular side. Asn50 and Asn167 each carry an N-linked (GlcNAc...) asparagine glycan. Cysteines 154 and 168 form a disulfide. Residues 238 to 258 (INLIIPCVLITSLAILVFYLP) traverse the membrane as a helical segment. Residues 259–266 (SDCGEKMT) are Cytoplasmic-facing. A helical membrane pass occupies residues 267–287 (LCISVLLALTVFLLLISKIVP). Over 288–299 (PTSLDVPLVGKY) the chain is Extracellular. The helical transmembrane segment at 300–320 (LMFTMVLVTFSIVTSVCVLNV) threads the bilayer. The Cytoplasmic portion of the chain corresponds to 321-458 (HHRSPTTHTM…WKYVAMVIDR (138 aa)). The chain crosses the membrane as a helical span at residues 459-479 (LFLWIFVFVCVFGTVGMFLQP).

This sequence belongs to the ligand-gated ion channel (TC 1.A.9) family. Acetylcholine receptor (TC 1.A.9.1) subfamily. Beta-2/CHRNB2 sub-subfamily. Neuronal AChR is a heteropentamer composed of two different types of subunits: alpha and beta. CHRNB2/Beta-2 subunit can be combined to CHRNA2/alpha-2, CHRNA3/alpha-3 or CHRNA4/alpha-4, CHRNA5/alpha-5, CHRNA6/alpha-6 and CHRNB3/beta-3 to give rise to functional receptors. CHRNA2:CHRNB2 and CHRNA4:CHRNB2 nAChR complexes exist in two subtypes: LS (low agonist sensitivity) with a (CHRNA2/4)3:(CHRNB2)2 and HS (high agonist sensitivity) with a (CHRNA2/4)2:(CHRNB2)3 stoichiometry; the subtypes differ in their subunit binding interfaces which are involved in ligand binding. Cells produce predominantly an (CHRNA4)3:(CHRNB2)2 nAChR. The stoichiometric form (CHRNA4)2:(CHRNB2)3 expression is selectively up-regulated by nicotine and has lower single channel conductance and calcium permeability. Also part of the stoichiometric forms: (CHRNA4:CHRNB2)2:CHRNB3 or (CHRNA6:CHRNB2)2:CHRNB3. Can form heteropentamers with CHRNA7, mainly found in basal forebrain cholinergic neurons. Interacts with RIC3; which is required for proper folding and assembly. Interacts with LYPD6. Expressed in most regions of the CNS.

Its subcellular location is the synaptic cell membrane. It is found in the cell membrane. It carries out the reaction Ca(2+)(in) = Ca(2+)(out). The enzyme catalyses K(+)(in) = K(+)(out). The catalysed reaction is Na(+)(in) = Na(+)(out). With respect to regulation, activated by a myriad of ligands such as acetylcholine, cytisine, nicotine, choline and epibatidine. Channel potentiation by calcium is stoichiometry-selective, CHRNA4:CHRNB2 nACh receptor is achieved by calcium association with topographically distinct sites framed by anionic residues within the CHRNA4 subunit and between the CHRNA4 and CHRNB2 subunits. Oligomeric amyloid-beta protein 42 activates specifially CHRNA7:CHRNB2 nAchRs. nAChR activity is inhibited by the antagonist alpha-conotoxins BuIA, PnIA, PnIC, GID and MII, small disulfide-constrained peptides from cone snails. In terms of biological role, component of neuronal acetylcholine receptors (nAChRs) that function as pentameric, ligand-gated cation channels with high calcium permeability among other activities. nAChRs are excitatory neurotrasnmitter receptors formed by a collection of nAChR subunits known to mediate synaptic transmission in the nervous system and the neuromuscular junction. Each nAchR subunit confers differential attributes to channel properties, including activation, deactivation and desensitization kinetics, pH sensitivity, cation permeability, and binding to allosteric modulators. CHRNB2 forms heteropentameric neuronal acetylcholine receptors with CHRNA2, CHRNA3, CHRNA4 and CHRNA6, as well as CHRNA5 and CHRNB3 as accesory subunits. Found in two major stoichiometric forms,(CHRNA4)3:(CHRNB2)2 and (CHRNA4)2:(CHRNB2)3, the two stoichiometric forms differ in their unitary conductance, calcium permeability, ACh sensitivity and potentiation by divalent cation. Heteropentameric channels with CHRNA6 and CHRNA4 exhibit high sensitivity to ACh and nicotine and are predominantly expressed in only a few brain areas, including dopaminergic neurons, norepirephrine neurons and cells of the visual system. nAChrs containing CHRNA6 subunits mediate endogenous cholinergic modulation of dopamine and gamma-aminobutyric acid (GABA) release in response to nicotine at nerve terminals. Also forms functional nAChRs with other subunits such as CHRNA7:CHRNB2, mainly expressed in basal forebrain cholinergic neurons. This chain is Neuronal acetylcholine receptor subunit beta-2 (Chrnb2), found in Rattus norvegicus (Rat).